A 2326-amino-acid polypeptide reads, in one-letter code: Probable voltage-dependent N-type calcium channel subunit alpha-1B (2326 aa).

Topologically, residues 1 to 83 are cytoplasmic; sequence MARLGNDVPA…DNIIRKYAKR (83 aa). Residues 17–37 form a disordered region; that stretch reads AGGGRGANRHAGPQAGQRGMY. The I repeat unit spans residues 75–351; that stretch reads NIIRKYAKRI…LVLGVLSGEF (277 aa). The chain crosses the membrane as a helical span at residues 84 to 107; the sequence is ITEWPPFEYMILATIIANCIVLAL. Over 108-124 the chain is Extracellular; sequence EQHLPDGDKTPMSERLD. The helical transmembrane segment at 125–145 threads the bilayer; it reads DTEPYFIGIFCFEAGIKIIAL. The Cytoplasmic portion of the chain corresponds to 146-156; the sequence is GFAFHKGSYLR. Residues 157–175 traverse the membrane as a helical segment; sequence NGWNVMDFVVVLTGILTTI. At 176–180 the chain is on the extracellular side; sequence GTDFD. A helical membrane pass occupies residues 181 to 204; that stretch reads LRTLRAVRVLRPLKLVSGIPSLQV. Residues 205-214 lie on the Cytoplasmic side of the membrane; it reads VLKSIMKAMV. Residues 215–237 form a helical membrane-spanning segment; sequence PLLQIGLLLFFAILMFAIIGLEF. Over 238-323 the chain is Extracellular; sequence YMGKFHKTCF…TANDALGNTW (86 aa). Asparagine 271 carries N-linked (GlcNAc...) asparagine glycosylation. The helical transmembrane segment at 324–348 threads the bilayer; sequence NWLYFIPLIVIGSFFMLNLVLGVLS. The Cytoplasmic segment spans residues 349–472; it reads GEFAKERERV…FFIRRMVKSQ (124 aa). The interval 371–388 is binding to the beta subunit; the sequence is QQVEQEFNRYLRWIHIAE. Residues 458-702 form an II repeat; the sequence is EKRFRFFIRR…VFLAIAVDNL (245 aa). The helical transmembrane segment at 473 to 491 threads the bilayer; sequence SFYWIVLCLVGLNTLCVAI. The Extracellular portion of the chain corresponds to 492–501; that stretch reads VHYDQPPLLT. A helical transmembrane segment spans residues 502 to 524; it reads DALYFAEFVFLGLFLTEMSLKMY. Residues 525 to 534 lie on the Cytoplasmic side of the membrane; it reads GLGPRNYFHS. Position 534 (serine 534) interacts with a 1,2-diacyl-sn-glycero-3-phospho-(1D-myo-inositol-4,5-bisphosphate). A helical membrane pass occupies residues 535–556; sequence SFNCFDFGVIVGSIFEVVWTAV. Over 557–563 the chain is Extracellular; sequence KPDTSFG. The chain crosses the membrane as a helical span at residues 564–576; it reads ISVLRALRLLRIF. 2 residues coordinate a 1,2-diacyl-sn-glycero-3-phospho-(1D-myo-inositol-4,5-bisphosphate): arginine 574 and lysine 577. The Cytoplasmic segment spans residues 577–594; sequence KVTKYWNSLRNLVVSLLN. A helical transmembrane segment spans residues 595–620; that stretch reads SMKSIISLLFLLFLFIVVFALLGMQL. The Extracellular portion of the chain corresponds to 621–672; it reads FGGQFNFEDGTPPTNFDTFPAAILTVFQILTGEDWNEVMYYGIEAHGGVKKG. A helical membrane pass occupies residues 673-699; sequence MFSSVYFIILTLFGNYTLLNVFLAIAV. Over 700 to 1148 the chain is Cytoplasmic; it reads DNLANAQELT…ACHYIVNLRY (449 aa). The interval 793-1048 is disordered; that stretch reads SHQIRPDMKT…LQHLPQQPED (256 aa). Composition is skewed to basic and acidic residues over residues 796-808, 854-879, 886-908, 935-979, and 994-1011; these read IRPDMKTHLDRPL, KLGEQDKGDGALDTGEPRANSKDDKR, SKETEKERDEKGRKGERSRSHEG, HGTE…EGAE, and SEEKREIGEKERETVLRE. Residues 1020 to 1032 are compositionally biased toward polar residues; it reads TQPSQDSGTQGNV. The stretch at 1134–1416 is one III repeat; sequence NPVRRACHYI…IFVALIIITF (283 aa). A helical membrane pass occupies residues 1149-1167; that stretch reads FEMCILLVITMSSIALAAE. Residues 1168-1175 are Extracellular-facing; it reads DPVQGDAP. Residues 1176 to 1200 form a helical membrane-spanning segment; sequence RNNVLKYLDYVFTGVFTFEMVIKMI. Residues 1201–1214 are Cytoplasmic-facing; that stretch reads NLGLILHPGSYFRD. Residues 1215–1235 form a helical membrane-spanning segment; that stretch reads LWNILDFIVVSGALVAFAFTG. Residues 1236–1241 are Extracellular-facing; it reads SRGKDL. A helical transmembrane segment spans residues 1242-1262; the sequence is NTIKSLRVLRVLRPLKTIKRL. Residues 1263 to 1280 are Cytoplasmic-facing; sequence PKLKAVFDCVVNSLKNVL. Residues 1281–1300 form a helical membrane-spanning segment; that stretch reads NILIVYMLFMFIFAVIAVQL. The Extracellular segment spans residues 1301–1387; the sequence is FKGKFFYCTD…DQGPSPSYRM (87 aa). Residues 1388–1413 form a helical membrane-spanning segment; sequence EMSIFYVVYFVVFPFFFVNIFVALII. Residues 1414 to 1468 are Cytoplasmic-facing; that stretch reads ITFQEQGDKVMSDCSLEKNERACIDFAISAKPLTRYMPQNKQTFQYKMWKFVVSP. An IV repeat occupies 1453-1708; the sequence is NKQTFQYKMW…LFVAVIMDNF (256 aa). The helical transmembrane segment at 1469–1487 threads the bilayer; it reads PFEYLIMALIALNTIVLMM. Residues 1488-1495 lie on the Extracellular side of the membrane; the sequence is KFYNAPDP. Residues 1496 to 1520 form a helical membrane-spanning segment; the sequence is YDRMLQYLNILFTFLFSMECVLKLI. At 1521-1530 the chain is on the cytoplasmic side; it reads GFGVLNYFRD. Residues 1531-1552 traverse the membrane as a helical segment; it reads AWNVFDFVTVLGSITDILVTEL. The Extracellular segment spans residues 1553–1558; it reads ADSFIN. Asparagine 1558 is a glycosylation site (N-linked (GlcNAc...) asparagine). Residues 1559–1577 traverse the membrane as a helical segment; the sequence is LSFLRLFRAARLIKLLRQG. The Cytoplasmic segment spans residues 1578-1596; the sequence is YTIRILLWTFVQSFKALPY. Residues 1597-1616 form a helical membrane-spanning segment; it reads VCLLIAMLFFIYAIIGMQVF. Topologically, residues 1617-1680 are extracellular; the sequence is GNIELDDDGA…IDGDECGSNF (64 aa). Residues 1681–1704 traverse the membrane as a helical segment; sequence AYFYFVSFIFFSSFLMLNLFVAVI. At 1705–2326 the chain is on the cytoplasmic side; sequence MDNFEYLTRD…YRETDEDDWC (622 aa). One can recognise an EF-hand domain in the interval 1721-1756; that stretch reads HHLDEFIRVWAEYDPGARGRITYNDMYEMLRHMCPP. Ca(2+)-binding residues include aspartate 1734, arginine 1740, and aspartate 1745. Residues 1897 to 1912 are compositionally biased toward polar residues; that stretch reads EEPSSYSTSHKNSVNP. 4 disordered regions span residues 1897-1916, 1932-1954, 2039-2242, and 2271-2326; these read EEPSSYSTSHKNSVNPLYQG, CAEGKKEVPESHPEEAGVTKSSS, PHHH…SSDP, and TTAT…DDWC. Over residues 1932–1948 the composition is skewed to basic and acidic residues; sequence CAEGKKEVPESHPEEAG. The segment covering 2039–2055 has biased composition (basic residues); sequence PHHHHHHHRCHHRREKK. 2 stretches are compositionally biased toward basic and acidic residues: residues 2056–2069 and 2077–2104; these read QRSLERATNRHADE and QLRDQSSKERERGRSQERRPPSSAEKQR. 3 stretches are compositionally biased toward polar residues: residues 2142-2161, 2275-2289, and 2302-2311; these read GSGSVNDSPLQSASGSSTPS, GRSPRTSSFTTQPPQ, and GRSTGPSTAA.

It belongs to the calcium channel alpha-1 subunit (TC 1.A.1.11) family. As to quaternary structure, multisubunit complex consisting of alpha-1, alpha-2, beta and delta subunits in a 1:1:1:1 ratio. The channel activity is directed by the pore-forming and voltage-sensitive alpha-1 subunit. In many cases, this subunit is sufficient to generate voltage-sensitive calcium channel activity. The auxiliary subunits beta and alpha-2/delta linked by a disulfide bridge regulate the channel activity. Phosphorylated in vitro by CaM-kinase II, PKA, PKC and CGPK. As to expression, expression is higher in the electric lobe than in the forebrain.

It localises to the membrane. The isoform alpha-1B gives rise to N-type calcium currents. N-type calcium channels belong to the 'high-voltage activated' (HVA) group. The sequence is that of Probable voltage-dependent N-type calcium channel subunit alpha-1B from Diplobatis ommata (Ocellated electric ray).